The primary structure comprises 72 residues: Translation initiation factor IF-1 1 (72 aa).

The S1-like domain occupies 1–72 (MAKEDRIEMQ…SRARIIFRAK (72 aa)).

It belongs to the IF-1 family. As to quaternary structure, component of the 30S ribosomal translation pre-initiation complex which assembles on the 30S ribosome in the order IF-2 and IF-3, IF-1 and N-formylmethionyl-tRNA(fMet); mRNA recruitment can occur at any time during PIC assembly.

It localises to the cytoplasm. Its function is as follows. One of the essential components for the initiation of protein synthesis. Stabilizes the binding of IF-2 and IF-3 on the 30S subunit to which N-formylmethionyl-tRNA(fMet) subsequently binds. Helps modulate mRNA selection, yielding the 30S pre-initiation complex (PIC). Upon addition of the 50S ribosomal subunit IF-1, IF-2 and IF-3 are released leaving the mature 70S translation initiation complex. This is Translation initiation factor IF-1 1 from Methylobacillus flagellatus (strain ATCC 51484 / DSM 6875 / VKM B-1610 / KT).